Here is a 75-residue protein sequence, read N- to C-terminus: Small ribosomal subunit protein bS18 (75 aa).

It belongs to the bacterial ribosomal protein bS18 family. As to quaternary structure, part of the 30S ribosomal subunit. Forms a tight heterodimer with protein bS6.

In terms of biological role, binds as a heterodimer with protein bS6 to the central domain of the 16S rRNA, where it helps stabilize the platform of the 30S subunit. The polypeptide is Small ribosomal subunit protein bS18 (Buchnera aphidicola subsp. Acyrthosiphon pisum (strain 5A)).